We begin with the raw amino-acid sequence, 888 residues long: Bifunctional uridylyltransferase/uridylyl-removing enzyme (888 aa).

Residues 1 to 348 (MATTTDKQVS…YHFAEDKIEP (348 aa)) form a uridylyltransferase region. The tract at residues 349-709 (INPRFRIINN…LQPTTSRGAT (361 aa)) is uridylyl-removing. Residues 468-590 (VDEHTILVIR…VGTQQRLDYL (123 aa)) enclose the HD domain. ACT domains are found at residues 710–787 (ELII…DDTM) and 817–888 (ELSI…NIEQ).

Belongs to the GlnD family. Mg(2+) serves as cofactor.

It carries out the reaction [protein-PII]-L-tyrosine + UTP = [protein-PII]-uridylyl-L-tyrosine + diphosphate. The enzyme catalyses [protein-PII]-uridylyl-L-tyrosine + H2O = [protein-PII]-L-tyrosine + UMP + H(+). Its activity is regulated as follows. Uridylyltransferase (UTase) activity is inhibited by glutamine, while glutamine activates uridylyl-removing (UR) activity. Functionally, modifies, by uridylylation and deuridylylation, the PII regulatory proteins (GlnB and homologs), in response to the nitrogen status of the cell that GlnD senses through the glutamine level. Under low glutamine levels, catalyzes the conversion of the PII proteins and UTP to PII-UMP and PPi, while under higher glutamine levels, GlnD hydrolyzes PII-UMP to PII and UMP (deuridylylation). Thus, controls uridylylation state and activity of the PII proteins, and plays an important role in the regulation of nitrogen assimilation and metabolism. The protein is Bifunctional uridylyltransferase/uridylyl-removing enzyme of Hydrogenovibrio crunogenus (strain DSM 25203 / XCL-2) (Thiomicrospira crunogena).